The chain runs to 217 residues: Small ribosomal subunit protein uS3 (217 aa).

One can recognise a KH type-2 domain in the interval 40-110 (IRDVINKGFN…EVYINIHEVR (71 aa)).

Belongs to the universal ribosomal protein uS3 family. As to quaternary structure, part of the 30S ribosomal subunit. Forms a tight complex with proteins S10 and S14.

Binds the lower part of the 30S subunit head. Binds mRNA in the 70S ribosome, positioning it for translation. The polypeptide is Small ribosomal subunit protein uS3 (Rickettsia massiliae (strain Mtu5)).